The chain runs to 161 residues: Ribosome maturation factor RimP (161 aa).

This sequence belongs to the RimP family.

It localises to the cytoplasm. Its function is as follows. Required for maturation of 30S ribosomal subunits. The polypeptide is Ribosome maturation factor RimP (Desulfosudis oleivorans (strain DSM 6200 / JCM 39069 / Hxd3) (Desulfococcus oleovorans)).